Here is a 91-residue protein sequence, read N- to C-terminus: Alpha-elapitoxin-Oh2b (91 aa).

Positions 1–21 (MKTLLLTLVVMTIVCLDLGYT) are cleaved as a signal peptide. Disulfide bonds link Cys24–Cys41, Cys34–Cys62, Cys47–Cys51, Cys66–Cys77, and Cys78–Cys83.

This sequence belongs to the three-finger toxin family. Long-chain subfamily. Type II alpha-neurotoxin sub-subfamily. In terms of assembly, monomer. In terms of tissue distribution, expressed by the venom gland.

The protein resides in the secreted. Binds with high affinity to muscular (alpha-1/CHRNA1) and neuronal (alpha-7/CHRNA7) nicotinic acetylcholine receptor (nAChR) and inhibits acetylcholine from binding to the receptor, thereby impairing neuromuscular and neuronal transmission. Recombinant LNTX1 leads to a functional block of the muscle-type acetylcholine receptors. Has a cytotoxic activity. This neurotoxin is lethal. In Ophiophagus hannah (King cobra), this protein is Alpha-elapitoxin-Oh2b.